A 1043-amino-acid polypeptide reads, in one-letter code: Isoleucine--tRNA ligase (1043 aa).

The 'HIGH' region signature appears at Pro-49–His-59. Residues Lys-592–Arg-596 carry the 'KMSKS' region motif. Lys-595 contributes to the ATP binding site.

It belongs to the class-I aminoacyl-tRNA synthetase family. IleS type 2 subfamily. Monomer. The cofactor is Zn(2+).

Its subcellular location is the cytoplasm. It carries out the reaction tRNA(Ile) + L-isoleucine + ATP = L-isoleucyl-tRNA(Ile) + AMP + diphosphate. Functionally, catalyzes the attachment of isoleucine to tRNA(Ile). As IleRS can inadvertently accommodate and process structurally similar amino acids such as valine, to avoid such errors it has two additional distinct tRNA(Ile)-dependent editing activities. One activity is designated as 'pretransfer' editing and involves the hydrolysis of activated Val-AMP. The other activity is designated 'posttransfer' editing and involves deacylation of mischarged Val-tRNA(Ile). The polypeptide is Isoleucine--tRNA ligase (Chlamydia abortus (strain DSM 27085 / S26/3) (Chlamydophila abortus)).